We begin with the raw amino-acid sequence, 41 residues long: Photosystem I reaction center subunit IX (41 aa).

The helical transmembrane segment at 7–27 (YLSSAPILATIWFAITAGILI) threads the bilayer.

The protein belongs to the PsaJ family.

It is found in the cellular thylakoid membrane. May help in the organization of the PsaE and PsaF subunits. This is Photosystem I reaction center subunit IX from Synechococcus sp. (strain ATCC 27144 / PCC 6301 / SAUG 1402/1) (Anacystis nidulans).